The sequence spans 211 residues: Pyridoxine/pyridoxamine 5'-phosphate oxidase (211 aa).

Substrate-binding positions include 7–10 (RREY) and K65. Residues 60–65 (RIVLLK), 75–76 (YT), R81, K82, and Q104 contribute to the FMN site. Substrate contacts are provided by Y122, R126, and S130. Residues 139–140 (QS) and W184 contribute to the FMN site. 190 to 192 (RLH) is a binding site for substrate. An FMN-binding site is contributed by R194.

This sequence belongs to the pyridoxamine 5'-phosphate oxidase family. As to quaternary structure, homodimer. FMN is required as a cofactor.

The catalysed reaction is pyridoxamine 5'-phosphate + O2 + H2O = pyridoxal 5'-phosphate + H2O2 + NH4(+). It catalyses the reaction pyridoxine 5'-phosphate + O2 = pyridoxal 5'-phosphate + H2O2. Its pathway is cofactor metabolism; pyridoxal 5'-phosphate salvage; pyridoxal 5'-phosphate from pyridoxamine 5'-phosphate: step 1/1. It functions in the pathway cofactor metabolism; pyridoxal 5'-phosphate salvage; pyridoxal 5'-phosphate from pyridoxine 5'-phosphate: step 1/1. Functionally, catalyzes the oxidation of either pyridoxine 5'-phosphate (PNP) or pyridoxamine 5'-phosphate (PMP) into pyridoxal 5'-phosphate (PLP). The protein is Pyridoxine/pyridoxamine 5'-phosphate oxidase of Vibrio vulnificus (strain CMCP6).